A 166-amino-acid chain; its full sequence is Cold-inducible RNA-binding protein B (166 aa).

An RRM domain is found at 5–83 (GKLFIGGLNF…RQIRVDQAGK (79 aa)). Residues 68–166 (GKAVDGRQIR…DSYDSYATHE (99 aa)) are disordered. Gly residues predominate over residues 92 to 115 (YRGGSSGGRGFFRGGRGRGGGDRG). The segment covering 133-149 (GSRDYYSSGRSQGSYGD) has biased composition (low complexity). Positions 157-166 (DSYDSYATHE) are enriched in basic and acidic residues.

Interacts with prmt1. Interacts with elavl1/elrA (via RRM3). Associates with ribosomes. Post-translationally, methylated on arginine residues within RGG motifs. Methylation by prmt1 promotes cytoplasmic accumulation. In terms of tissue distribution, in adults, most abundant in testis, ovary, brain and liver, with lower expression in kidney and heart.

The protein localises to the nucleus. Its subcellular location is the nucleoplasm. The protein resides in the cytoplasm. Its function is as follows. Cold-inducible mRNA binding protein. Acts cooperatively with elavl1/elrA to stabilize AU-rich element (ARE)-containing mRNAs by binding to them and inhibiting their deadenylation. Essential for embryonic gastrulation and neural development, acting to maintain the expression of a set of adhesion molecules, and cell movement during embryogenesis. Required for pronephros development. This chain is Cold-inducible RNA-binding protein B (cirbp-b), found in Xenopus laevis (African clawed frog).